The primary structure comprises 292 residues: Transforming growth factor-beta receptor type 3-like protein (292 aa).

The signal sequence occupies residues 1–16 (MLGTVLLLALLPGITT). In terms of domain architecture, ZP; truncated spans 17 to 170 (LPSGPPAPPF…APAPLTPPPP (154 aa)). Topologically, residues 17-244 (LPSGPPAPPF…PAPAALEPAP (228 aa)) are extracellular. A disulfide bridge links cysteine 85 with cysteine 147. Residues 160 to 236 (RAPAPLTPPP…AVRPEPPAPA (77 aa)) form a disordered region. Pro residues-rich tracts occupy residues 164–175 (PLTPPPPPPPSR) and 213–222 (PRPPPRPPKS). A helical transmembrane segment spans residues 245–265 (VVALVLAAFVLGAALAAGLGL). The Cytoplasmic segment spans residues 266–292 (VCAHSAPHAPGPPARASPSGPQPRRSQ). Positions 273–292 (HAPGPPARASPSGPQPRRSQ) are disordered. Residues 281 to 292 (ASPSGPQPRRSQ) are compositionally biased toward low complexity.

In terms of processing, glycosylated. In terms of tissue distribution, expressed in pituitary gland gonadotrope cells.

Its subcellular location is the cell membrane. Expressed in gonadotrope cells, acts as an inhibin B coreceptor and regulates follicle-stimulating hormone (FSH) levels and female fertility. In Homo sapiens (Human), this protein is Transforming growth factor-beta receptor type 3-like protein.